Here is a 288-residue protein sequence, read N- to C-terminus: uncharacterized protein (288 aa).

NAD(+)-binding positions include Gly6 to His20 and Thr97. The active site involves Lys172. Position 240 (Lys240) interacts with NAD(+).

This sequence belongs to the HIBADH-related family.

Its subcellular location is the cell membrane. The protein localises to the membrane raft. This is an uncharacterized protein from Bacillus subtilis (strain 168).